We begin with the raw amino-acid sequence, 113 residues long: Protein translation factor SUI1 homolog 1 (113 aa).

Residues 1-24 (MSELDSQVPTAFDPFADANAEDSG) are disordered. At Ser2 the chain carries N-acetylserine.

The protein belongs to the SUI1 family.

Functionally, probably involved in translation. The chain is Protein translation factor SUI1 homolog 1 from Arabidopsis thaliana (Mouse-ear cress).